The following is a 1311-amino-acid chain: MSATMSGSGSAPCRFAHYFIVCGLDDETGLEPDALAALYQWLEADRQGKDPEATAAGENFDQSPLKRTFKSKVLAHYPENIECNPFDQDAVNMLCMPKGLSFRTQRDSLAPHFHSFLITREDGSRTYGFVHTFYEEVTSPQICSAMQTLHQMHQAEHNTSAQNCTSSSSSSSSSSSSSSMDSLSSSLDDVDSPSAHGGRRTCEGYDSIRDTLYVSKAMCLIAPMPFMHACKRFLAQMHRAVSCSPPPPLPLESYIYNVLYEVPLPASGRSLKFHGVYEPILCQRPGVGELPLADFPLADAFRLLGVENLVQLFTCVLLEMQILLYSQDYQRLMVVAEGITTLLFPFQWQHVYVPILPASLLHFLDAPVPYLMGLQSKEGTDRSKLELPQEANLCFVDIDNHCIELPEDFPQFPNRSEFIQELSEVLLSFGQSPEGGSSSPEPAVMSLQTSVLEKELKSTSLRELVDDKTNGNLGGEALDVLELLQGNPTLERLQALAKRTGVKVARLEALAAGQKGDEGVGGRSPVEEEELRNAKLNVQLREVFAARFATMFADYESFVIQNSPDLESWLTNREQMHNFDKASFLSDQPEPYLPFLSHFIETQMFATFIDNKIMSQWEEKEPLLRVFDGRIEKARLYNVRAPSLRSSVYQKCTFLKESAQAIEQRLRKIDHTAIHPHLLDMKIGQGKYQQGFFPKLQADVLASGPTSNKWSNRTCSTQRRVERHRQQNEHLVLDNELKEKYMQEARNLGKNLRQPKLSDLSPAVIAQTNWKFVEGLLKECKMKTKRMLVEKMGREAVELGHGEANITGLEENTLIASLCDLLERIWSHGLQVKQGKSALWSHLLHYQAREEKNEQQLESPVSNGQERRKTESSVGLPGLRVSVIQDMRHIQNMAEIKTDVGRARAWIRLSLEKKLLSQHLKQLLSNQALTKKLYKRYAFLRCEEEKEQFLFHLLSLNAVDYFCFTSVFTTIMIPYRAVIIPIKKLSNAMTTSNPWLCVSGELGDSGILQITKNILEMTFDCQNLGKLTTVQLGHDNSGLLAKWLVDCVMVRNEITGHTYKFPCGRWLGKGVDDGSLERVLIGEFVVPCGDDEGGRGSKTPPLQRSPSQIRRISITSLTGKGNKPTTVQIQESIGEAVNNIIKHFHKPEKERGSLTVLLCGEGGLVWALEQFFHHGFRSARIFQKNVFVWDFFERIVAFMENRDQTGDLQESPEPLSLNSESLCRYVNAINNMPRNIGKDGKFQLLVCLGARDRLLPQWLPLLAESPVITRMYEENALLRDKLTVSSLLGVLETLHDFPITLETSLTKSVEL.

Positions 53–270 (ATAAGENFDQ…EVPLPASGRS (218 aa)) constitute a uDENN domain. The span at 154-165 (QAEHNTSAQNCT) shows a compositional bias: polar residues. Positions 154 to 201 (QAEHNTSAQNCTSSSSSSSSSSSSSSMDSLSSSLDDVDSPSAHGGRRT) are disordered. Over residues 166–187 (SSSSSSSSSSSSSSMDSLSSSL) the composition is skewed to low complexity. The region spanning 289-452 (ELPLADFPLA…AVMSLQTSVL (164 aa)) is the cDENN domain. One can recognise a dDENN domain in the interval 454–619 (KELKSTSLRE…DNKIMSQWEE (166 aa)). The 161-residue stretch at 809 to 969 (LEENTLIASL…DYFCFTSVFT (161 aa)) folds into the RUN 1 domain. The disordered stretch occupies residues 854–874 (EQQLESPVSNGQERRKTESSV). A helical transmembrane segment spans residues 962–982 (FCFTSVFTTIMIPYRAVIIPI). The PLAT domain occupies 973–1081 (IPYRAVIIPI…DDGSLERVLI (109 aa)). The region spanning 1155 to 1306 (TVLLCGEGGL…FPITLETSLT (152 aa)) is the RUN 2 domain.

It belongs to the RAB6IP1 family.

The protein resides in the membrane. Functionally, guanine nucleotide exchange factor (GEF) which may activate the small GTPases Rab. May promote the exchange of GDP to GTP, converting inactive GDP-bound Rab proteins into their active GTP-bound form. This chain is DENN domain-containing protein 5B (dennd5b), found in Danio rerio (Zebrafish).